We begin with the raw amino-acid sequence, 201 residues long: Large ribosomal subunit protein uL4 (201 aa).

The segment at 44 to 71 is disordered; it reads RAQKTRAEVTGSGKKPWRQKGTGRARSG.

It belongs to the universal ribosomal protein uL4 family. Part of the 50S ribosomal subunit.

Its function is as follows. One of the primary rRNA binding proteins, this protein initially binds near the 5'-end of the 23S rRNA. It is important during the early stages of 50S assembly. It makes multiple contacts with different domains of the 23S rRNA in the assembled 50S subunit and ribosome. In terms of biological role, forms part of the polypeptide exit tunnel. In Shigella flexneri serotype 5b (strain 8401), this protein is Large ribosomal subunit protein uL4.